Reading from the N-terminus, the 208-residue chain is N-(5'-phosphoribosyl)anthranilate isomerase (208 aa).

It belongs to the TrpF family.

The catalysed reaction is N-(5-phospho-beta-D-ribosyl)anthranilate = 1-(2-carboxyphenylamino)-1-deoxy-D-ribulose 5-phosphate. It functions in the pathway amino-acid biosynthesis; L-tryptophan biosynthesis; L-tryptophan from chorismate: step 3/5. The polypeptide is N-(5'-phosphoribosyl)anthranilate isomerase (Neisseria meningitidis serogroup B (strain ATCC BAA-335 / MC58)).